A 313-amino-acid polypeptide reads, in one-letter code: Foldase protein PrsA (313 aa).

An N-terminal signal peptide occupies residues 1–20; that stretch reads MKKKLLAGAITLLSVATLAA. A lipid anchor (N-palmitoyl cysteine) is attached at Cys21. A lipid anchor (S-diacylglycerol cysteine) is attached at Cys21. Residues 143 to 241 enclose the PpiC domain; the sequence is TPDVTAQIIR…SQYYIVKLTK (99 aa).

It belongs to the PrsA family.

The protein localises to the cell membrane. The catalysed reaction is [protein]-peptidylproline (omega=180) = [protein]-peptidylproline (omega=0). In terms of biological role, plays a major role in protein secretion by helping the post-translocational extracellular folding of several secreted proteins. In Streptococcus pneumoniae serotype 4 (strain ATCC BAA-334 / TIGR4), this protein is Foldase protein PrsA.